We begin with the raw amino-acid sequence, 404 residues long: Type II restriction enzyme EcoRII (404 aa).

Tyr-308 is an active-site residue.

In terms of assembly, homodimer. Requires Mg(2+) as cofactor.

The catalysed reaction is Endonucleolytic cleavage of DNA to give specific double-stranded fragments with terminal 5'-phosphates.. Its function is as follows. An E and P subtype restriction enzyme that recognizes the double-stranded sequence 5'-CCWGG-3' and cleaves before C-1. This is Type II restriction enzyme EcoRII (ecoRIIR) from Escherichia coli.